The primary structure comprises 75 residues: Protein RegB (75 aa).

Required for optimal exotoxin A production. The polypeptide is Protein RegB (regB) (Pseudomonas aeruginosa (strain ATCC 15692 / DSM 22644 / CIP 104116 / JCM 14847 / LMG 12228 / 1C / PRS 101 / PAO1)).